The chain runs to 360 residues: Mitogen-activated protein kinase 14 (360 aa).

Ser2 is modified (N-acetylserine). Residue Ser2 is modified to Phosphoserine. At Thr16 the chain carries Phosphothreonine. The Protein kinase domain maps to 24 to 308; it reads YQNLSPVGSG…AAQALAHAYF (285 aa). Residues 30–38 and Lys53 contribute to the ATP site; that span reads VGSGAYGSV. Lys53 carries the N6-acetyllysine modification. Residue Asp150 is the Proton acceptor of the active site. Position 152 is an N6-acetyllysine (Lys152). At Thr180 the chain carries Phosphothreonine; by MAP2K3, MAP2K4, MAP2K6 and autocatalysis. A TXY motif is present at residues 180–182; it reads TGY. Residue Tyr182 is modified to Phosphotyrosine; by MAP2K3, MAP2K4, MAP2K6 and autocatalysis. Thr263 carries the post-translational modification Phosphothreonine. Tyr323 carries the post-translational modification Phosphotyrosine; by ZAP70.

It belongs to the protein kinase superfamily. CMGC Ser/Thr protein kinase family. MAP kinase subfamily. In terms of assembly, component of a signaling complex containing at least AKAP13, PKN1, MAPK14, ZAK and MAP2K3. Within this complex, AKAP13 interacts directly with PKN1, which in turn recruits MAPK14, MAP2K3 and ZAK. Binds to a kinase interaction motif within the protein tyrosine phosphatase, PTPRR. This interaction retains MAPK14 in the cytoplasm and prevents nuclear accumulation. Interacts with SPAG9 and GADD45A. Interacts with CDC25B, CDC25C, DUSP1, DUSP10, DUSP16, NP60, SUPT20H and TAB1. Interacts with casein kinase II subunits CSNK2A1 and CSNK2B. Interacts with PPM1D. Interacts with CDK5RAP3; recruits PPM1D to MAPK14 and may regulate its dephosphorylation. Interacts with DUSP2; this interaction does not lead to catalytic activation of DUSP2 and dephosphrylation of MAPK14. Requires Mg(2+) as cofactor. In terms of processing, dually phosphorylated on Thr-180 and Tyr-182 by the MAP2Ks MAP2K3/MKK3, MAP2K4/MKK4 and MAP2K6/MKK6 in response to inflammatory citokines, environmental stress or growth factors, which activates the enzyme. Dual phosphorylation can also be mediated by TAB1-mediated autophosphorylation. TCR engagement in T-cells also leads to Tyr-323 phosphorylation by ZAP70. Dephosphorylated and inactivated by DUPS1, DUSP10 and DUSP16. PPM1D also mediates dephosphorylation and inactivation of MAPK14. Acetylated at Lys-53 and Lys-152 by KAT2B and EP300. Acetylation at Lys-53 increases the affinity for ATP and enhances kinase activity. Lys-53 and Lys-152 are deacetylated by HDAC3. Post-translationally, ubiquitinated. Ubiquitination leads to degradation by the proteasome pathway.

The protein resides in the cytoplasm. It is found in the nucleus. The catalysed reaction is L-seryl-[protein] + ATP = O-phospho-L-seryl-[protein] + ADP + H(+). It catalyses the reaction L-threonyl-[protein] + ATP = O-phospho-L-threonyl-[protein] + ADP + H(+). Activated by cell stresses such as DNA damage, heat shock, osmotic shock, anisomycin and sodium arsenite, as well as pro-inflammatory stimuli such as bacterial lipopolysaccharide (LPS) and interleukin-1. Activation occurs through dual phosphorylation of Thr-180 and Tyr-182 by either of two dual specificity kinases, MAP2K3/MKK3 or MAP2K6/MKK6, and potentially also MAP2K4/MKK4, as well as by TAB1-mediated autophosphorylation. MAPK14 phosphorylated on both Thr-180 and Tyr-182 is 10-20-fold more active than MAPK14 phosphorylated only on Thr-180, whereas MAPK14 phosphorylated on Tyr-182 alone is inactive. whereas Thr-180 is necessary for catalysis, Tyr-182 may be required for auto-activation and substrate recognition. Phosphorylated at Tyr-323 by ZAP70 in an alternative activation pathway in response to TCR signaling in T-cells. This alternative pathway is inhibited by GADD45A. Inhibited by dual specificity phosphatases, such as DUSP1, DUSP10, and DUSP16. Specifically inhibited by the binding of pyridinyl-imidazole compounds, which are cytokine-suppressive anti-inflammatory drugs (CSAID). SB203580 is an inhibitor of MAPK14. Serine/threonine kinase which acts as an essential component of the MAP kinase signal transduction pathway. MAPK14 is one of the four p38 MAPKs which play an important role in the cascades of cellular responses evoked by extracellular stimuli such as pro-inflammatory cytokines or physical stress leading to direct activation of transcription factors. Accordingly, p38 MAPKs phosphorylate a broad range of proteins and it has been estimated that they may have approximately 200 to 300 substrates each. Some of the targets are downstream kinases which are activated through phosphorylation and further phosphorylate additional targets. RPS6KA5/MSK1 and RPS6KA4/MSK2 can directly phosphorylate and activate transcription factors such as CREB1, ATF1, the NF-kappa-B isoform RELA/NFKB3, STAT1 and STAT3, but can also phosphorylate histone H3 and the nucleosomal protein HMGN1. RPS6KA5/MSK1 and RPS6KA4/MSK2 play important roles in the rapid induction of immediate-early genes in response to stress or mitogenic stimuli, either by inducing chromatin remodeling or by recruiting the transcription machinery. On the other hand, two other kinase targets, MAPKAPK2/MK2 and MAPKAPK3/MK3, participate in the control of gene expression mostly at the post-transcriptional level, by phosphorylating ZFP36 (tristetraprolin) and ELAVL1, and by regulating EEF2K, which is important for the elongation of mRNA during translation. MKNK1/MNK1 and MKNK2/MNK2, two other kinases activated by p38 MAPKs, regulate protein synthesis by phosphorylating the initiation factor EIF4E2. MAPK14 also interacts with casein kinase II, leading to its activation through autophosphorylation and further phosphorylation of TP53/p53. In the cytoplasm, the p38 MAPK pathway is an important regulator of protein turnover. For example, CFLAR is an inhibitor of TNF-induced apoptosis whose proteasome-mediated degradation is regulated by p38 MAPK phosphorylation. In a similar way, MAPK14 phosphorylates the ubiquitin ligase SIAH2, regulating its activity towards EGLN3. MAPK14 may also inhibit the lysosomal degradation pathway of autophagy by interfering with the intracellular trafficking of the transmembrane protein ATG9. Another function of MAPK14 is to regulate the endocytosis of membrane receptors by different mechanisms that impinge on the small GTPase RAB5A. In addition, clathrin-mediated EGFR internalization induced by inflammatory cytokines and UV irradiation depends on MAPK14-mediated phosphorylation of EGFR itself as well as of RAB5A effectors. Ectodomain shedding of transmembrane proteins is regulated by p38 MAPKs as well. In response to inflammatory stimuli, p38 MAPKs phosphorylate the membrane-associated metalloprotease ADAM17. Such phosphorylation is required for ADAM17-mediated ectodomain shedding of TGF-alpha family ligands, which results in the activation of EGFR signaling and cell proliferation. Another p38 MAPK substrate is FGFR1. FGFR1 can be translocated from the extracellular space into the cytosol and nucleus of target cells, and regulates processes such as rRNA synthesis and cell growth. FGFR1 translocation requires p38 MAPK activation. In the nucleus, many transcription factors are phosphorylated and activated by p38 MAPKs in response to different stimuli. Classical examples include ATF1, ATF2, ATF6, ELK1, PTPRH, DDIT3, TP53/p53 and MEF2C and MEF2A. The p38 MAPKs are emerging as important modulators of gene expression by regulating chromatin modifiers and remodelers. The promoters of several genes involved in the inflammatory response, such as IL6, IL8 and IL12B, display a p38 MAPK-dependent enrichment of histone H3 phosphorylation on 'Ser-10' (H3S10ph) in LPS-stimulated myeloid cells. This phosphorylation enhances the accessibility of the cryptic NF-kappa-B-binding sites marking promoters for increased NF-kappa-B recruitment. Phosphorylates CDC25B and CDC25C which is required for binding to 14-3-3 proteins and leads to initiation of a G2 delay after ultraviolet radiation. Phosphorylates TIAR following DNA damage, releasing TIAR from GADD45A mRNA and preventing mRNA degradation. The p38 MAPKs may also have kinase-independent roles, which are thought to be due to the binding to targets in the absence of phosphorylation. Protein O-Glc-N-acylation catalyzed by the OGT is regulated by MAPK14, and, although OGT does not seem to be phosphorylated by MAPK14, their interaction increases upon MAPK14 activation induced by glucose deprivation. This interaction may regulate OGT activity by recruiting it to specific targets such as neurofilament H, stimulating its O-Glc-N-acylation. Required in mid-fetal development for the growth of embryo-derived blood vessels in the labyrinth layer of the placenta. Also plays an essential role in developmental and stress-induced erythropoiesis, through regulation of EPO gene expression. Phosphorylates S100A9 at 'Thr-113'. The chain is Mitogen-activated protein kinase 14 from Canis lupus familiaris (Dog).